A 260-amino-acid polypeptide reads, in one-letter code: Acetylglutamate kinase (260 aa).

Substrate contacts are provided by residues 46–47 (GG), Arg68, and Asn160.

Belongs to the acetylglutamate kinase family. ArgB subfamily.

The protein localises to the cytoplasm. The enzyme catalyses N-acetyl-L-glutamate + ATP = N-acetyl-L-glutamyl 5-phosphate + ADP. The protein operates within amino-acid biosynthesis; L-arginine biosynthesis; N(2)-acetyl-L-ornithine from L-glutamate: step 2/4. Catalyzes the ATP-dependent phosphorylation of N-acetyl-L-glutamate. This is Acetylglutamate kinase from Shewanella putrefaciens (strain CN-32 / ATCC BAA-453).